The chain runs to 203 residues: Putative zinc finger protein 876 (203 aa).

4 consecutive C2H2-type zinc fingers follow at residues Tyr-63–His-85, Tyr-91–His-113, Tyr-119–His-141, and Tyr-147–His-169. The C2H2-type 5; degenerate zinc-finger motif lies at Tyr-175–Gln-197.

This sequence belongs to the krueppel C2H2-type zinc-finger protein family.

The protein resides in the nucleus. Functionally, may be involved in transcriptional regulation. The sequence is that of Putative zinc finger protein 876 (ZNF876P) from Homo sapiens (Human).